A 258-amino-acid chain; its full sequence is Snake venom serine protease (258 aa).

An N-terminal signal peptide occupies residues 1–18 (MVLIRVLANLLILQLSYA). Positions 19–24 (QKSSEL) are excised as a propeptide. Residues 25 to 249 (VIGGDECNIN…YTEWIQSILA (225 aa)) form the Peptidase S1 domain. Cystine bridges form between cysteine 31–cysteine 163, cysteine 50–cysteine 66, cysteine 98–cysteine 256, cysteine 142–cysteine 210, cysteine 174–cysteine 189, and cysteine 200–cysteine 225. Active-site charge relay system residues include histidine 65 and aspartate 110. The N-linked (GlcNAc...) asparagine glycan is linked to asparagine 154. Serine 204 serves as the catalytic Charge relay system.

It belongs to the peptidase S1 family. Snake venom subfamily. As to quaternary structure, monomer. In terms of tissue distribution, expressed by the venom gland.

It is found in the secreted. In terms of biological role, snake venom serine protease that may act in the hemostasis system of the prey. The protein is Snake venom serine protease of Lachesis stenophrys (Central American bushmaster).